The following is a 269-amino-acid chain: 5'-nucleotidase SurE (269 aa).

A divalent metal cation is bound by residues Asp11, Asp12, Ser43, and Asn101.

The protein belongs to the SurE nucleotidase family. A divalent metal cation serves as cofactor.

It is found in the cytoplasm. It catalyses the reaction a ribonucleoside 5'-phosphate + H2O = a ribonucleoside + phosphate. Functionally, nucleotidase that shows phosphatase activity on nucleoside 5'-monophosphates. The protein is 5'-nucleotidase SurE of Prochlorococcus marinus subsp. pastoris (strain CCMP1986 / NIES-2087 / MED4).